We begin with the raw amino-acid sequence, 499 residues long: Membrane-associated tyrosine- and threonine-specific cdc2-inhibitory kinase (499 aa).

Position 1 is an N-acetylmethionine (methionine 1). Residues 1-29 form a disordered region; that stretch reads MLERPPALAMPMPTEGTPPPLSGTPIPVP. Residues 16–28 show a composition bias toward pro residues; that stretch reads GTPPPLSGTPIPV. The residue at position 17 (threonine 17) is a Phosphothreonine. At serine 40 the chain carries Phosphoserine. The segment at 42-72 is disordered; the sequence is KRPRGLSRSLPPPPPAKGSIPISRLFPPRTP. 2 positions are modified to phosphoserine: serine 94 and serine 120. A Protein kinase domain is found at 110–359; it reads FQRLSRLGHG…AEALLALPVL (250 aa). ATP contacts are provided by residues 116-124 and lysine 139; that span reads LGHGSYGEV. Serine 143 and serine 160 each carry phosphoserine. The active-site Proton acceptor is aspartate 233. Residues asparagine 238, aspartate 251, and glycine 253 each coordinate Mg(2+). A Membrane-association motif motif is present at residues 382-398; the sequence is LWQALLALLCWLWHGLA. The tract at residues 398–499 is interaction with PIN1; that stretch reads AHPASWLQPL…SLFEDTLDPT (102 aa). Serine 426 is modified (phosphoserine; by PLK1). An interaction with CDC2-CCNB1 region spans residues 437–499; sequence GPSLSPEAVL…SLFEDTLDPT (63 aa). The disordered stretch occupies residues 451-485; sequence GSTSTPRSRCTPRDALDLSDINSEPPRGSFPSFEP. Serine 469, serine 473, and serine 482 each carry phosphoserine. At threonine 495 the chain carries Phosphothreonine; by PLK1.

It belongs to the protein kinase superfamily. Ser/Thr protein kinase family. WEE1 subfamily. In terms of assembly, interacts with CDC2-CCNB1 complex. Can also interact with PIN1 when phosphorylated by CDC2-CCNB1. In terms of processing, autophosphorylated. Phosphorylated by CDC2-CCNB1 complexes on undefined serine and threonine residues. The phosphorylation by CDC2-CCNB1 complexes may inhibit the catalytic activity.

The protein resides in the endoplasmic reticulum membrane. It localises to the golgi apparatus membrane. It catalyses the reaction L-seryl-[protein] + ATP = O-phospho-L-seryl-[protein] + ADP + H(+). The catalysed reaction is L-threonyl-[protein] + ATP = O-phospho-L-threonyl-[protein] + ADP + H(+). Its activity is regulated as follows. Negatively regulated by hyperphosphorylation during mitosis. The hyperphosphorylated form does not associate with CCNB1-CDC2 complexes. The PLK1 protein kinase may be required for mitotic phosphorylation. Its function is as follows. Acts as a negative regulator of entry into mitosis (G2 to M transition) by phosphorylation of the CDK1 kinase specifically when CDK1 is complexed to cyclins. Mediates phosphorylation of CDK1 predominantly on 'Thr-14'. Also involved in Golgi fragmentation. May be involved in phosphorylation of CDK1 on 'Tyr-15' to a lesser degree, however tyrosine kinase activity is unclear and may be indirect. This chain is Membrane-associated tyrosine- and threonine-specific cdc2-inhibitory kinase (PKMYT1), found in Homo sapiens (Human).